The sequence spans 235 residues: Large ribosomal subunit protein uL1 (235 aa).

Belongs to the universal ribosomal protein uL1 family. As to quaternary structure, part of the 50S ribosomal subunit.

Its function is as follows. Binds directly to 23S rRNA. The L1 stalk is quite mobile in the ribosome, and is involved in E site tRNA release. Functionally, protein L1 is also a translational repressor protein, it controls the translation of the L11 operon by binding to its mRNA. This Mycobacterium tuberculosis (strain ATCC 25177 / H37Ra) protein is Large ribosomal subunit protein uL1.